The following is a 323-amino-acid chain: tRNA U34 carboxymethyltransferase (323 aa).

Residues lysine 91, tryptophan 105, lysine 110, glycine 130, 181–182 (IE), methionine 196, tyrosine 200, and arginine 315 contribute to the carboxy-S-adenosyl-L-methionine site.

This sequence belongs to the class I-like SAM-binding methyltransferase superfamily. CmoB family. In terms of assembly, homotetramer.

It carries out the reaction carboxy-S-adenosyl-L-methionine + 5-hydroxyuridine(34) in tRNA = 5-carboxymethoxyuridine(34) in tRNA + S-adenosyl-L-homocysteine + H(+). In terms of biological role, catalyzes carboxymethyl transfer from carboxy-S-adenosyl-L-methionine (Cx-SAM) to 5-hydroxyuridine (ho5U) to form 5-carboxymethoxyuridine (cmo5U) at position 34 in tRNAs. This chain is tRNA U34 carboxymethyltransferase, found in Yersinia pseudotuberculosis serotype O:1b (strain IP 31758).